The following is a 203-amino-acid chain: ATP-dependent Clp protease proteolytic subunit (203 aa).

Serine 103 functions as the Nucleophile in the catalytic mechanism. Residue histidine 128 is part of the active site.

It belongs to the peptidase S14 family. In terms of assembly, fourteen ClpP subunits assemble into 2 heptameric rings which stack back to back to give a disk-like structure with a central cavity, resembling the structure of eukaryotic proteasomes.

Its subcellular location is the cytoplasm. The catalysed reaction is Hydrolysis of proteins to small peptides in the presence of ATP and magnesium. alpha-casein is the usual test substrate. In the absence of ATP, only oligopeptides shorter than five residues are hydrolyzed (such as succinyl-Leu-Tyr-|-NHMec, and Leu-Tyr-Leu-|-Tyr-Trp, in which cleavage of the -Tyr-|-Leu- and -Tyr-|-Trp bonds also occurs).. Cleaves peptides in various proteins in a process that requires ATP hydrolysis. Has a chymotrypsin-like activity. Plays a major role in the degradation of misfolded proteins. The protein is ATP-dependent Clp protease proteolytic subunit of Dichelobacter nodosus (strain VCS1703A).